The sequence spans 303 residues: Porphobilinogen deaminase (303 aa).

An S-(dipyrrolylmethanemethyl)cysteine modification is found at Cys241.

Belongs to the HMBS family. Monomer. Requires dipyrromethane as cofactor.

The catalysed reaction is 4 porphobilinogen + H2O = hydroxymethylbilane + 4 NH4(+). It participates in porphyrin-containing compound metabolism; protoporphyrin-IX biosynthesis; coproporphyrinogen-III from 5-aminolevulinate: step 2/4. It functions in the pathway porphyrin-containing compound metabolism; chlorophyll biosynthesis. Its function is as follows. Tetrapolymerization of the monopyrrole PBG into the hydroxymethylbilane pre-uroporphyrinogen in several discrete steps. This is Porphobilinogen deaminase from Roseiflexus sp. (strain RS-1).